We begin with the raw amino-acid sequence, 552 residues long: Putative transport protein HAPS_0158 (552 aa).

Transmembrane regions (helical) follow at residues 4-24, 28-48, 65-85, 95-115, and 157-177; these read IALTVSLLSLVAVIGLWIGHI, GVSLGIGGVLFGGILVSHFMT, FGLILFVYTIGIQVGPGFFAS, AFAVMIVGISGILVILLHKIF, and MGYAIAYPFGIIGILLAMWLI. RCK C-terminal domains lie at 193–275 and 277–360; these read DSAT…ILGE and VNVS…IIGN. 6 helical membrane passes run 370 to 390, 393 to 413, 438 to 458, 463 to 483, 492 to 512, and 532 to 552; these read MLPIFIGVGLGVLLGSIPIYL, FPVALKLGLAGGPLVVALILA, IVLFLAVVGWKAGGNFLNTLL, LAWIGYGAIITFVPLIVTGLV, YLSLCGLLAGSMTDPPALAFA, and LVMFCRIILPQILAILLWVAG.

It belongs to the AAE transporter (TC 2.A.81) family. YidE subfamily.

It localises to the cell membrane. The sequence is that of Putative transport protein HAPS_0158 from Glaesserella parasuis serovar 5 (strain SH0165) (Haemophilus parasuis).